Reading from the N-terminus, the 319-residue chain is F-box only protein 8 (319 aa).

Positions 68–111 (FINLEMLPPELSFTILSYLNATDLCLASCVWQDLANDELLWQGL) constitute an F-box domain. Positions 146-276 (FNANPDEGVN…LILLSIDLTS (131 aa)) constitute an SEC7 domain.

Functionally, may promote guanine-nucleotide exchange on an ARF. Promotes the activation of ARF through replacement of GDP with GTP (Potential). The polypeptide is F-box only protein 8 (FBXO8) (Homo sapiens (Human)).